A 138-amino-acid polypeptide reads, in one-letter code: Nucleoside diphosphate kinase (138 aa).

Lys9, Phe57, Arg85, Thr91, Arg102, and Asn112 together coordinate ATP. Catalysis depends on His115, which acts as the Pros-phosphohistidine intermediate.

The protein belongs to the NDK family. Mg(2+) is required as a cofactor.

Its subcellular location is the cytoplasm. It carries out the reaction a 2'-deoxyribonucleoside 5'-diphosphate + ATP = a 2'-deoxyribonucleoside 5'-triphosphate + ADP. The enzyme catalyses a ribonucleoside 5'-diphosphate + ATP = a ribonucleoside 5'-triphosphate + ADP. Its function is as follows. Major role in the synthesis of nucleoside triphosphates other than ATP. The ATP gamma phosphate is transferred to the NDP beta phosphate via a ping-pong mechanism, using a phosphorylated active-site intermediate. The polypeptide is Nucleoside diphosphate kinase (Picrophilus torridus (strain ATCC 700027 / DSM 9790 / JCM 10055 / NBRC 100828 / KAW 2/3)).